The sequence spans 103 residues: UPF0145 protein PTH_2690 (103 aa).

This sequence belongs to the UPF0145 family.

The chain is UPF0145 protein PTH_2690 from Pelotomaculum thermopropionicum (strain DSM 13744 / JCM 10971 / SI).